A 396-amino-acid polypeptide reads, in one-letter code: Tryptophan synthase beta chain (396 aa).

N6-(pyridoxal phosphate)lysine is present on K86.

This sequence belongs to the TrpB family. Tetramer of two alpha and two beta chains. Pyridoxal 5'-phosphate serves as cofactor.

The enzyme catalyses (1S,2R)-1-C-(indol-3-yl)glycerol 3-phosphate + L-serine = D-glyceraldehyde 3-phosphate + L-tryptophan + H2O. It participates in amino-acid biosynthesis; L-tryptophan biosynthesis; L-tryptophan from chorismate: step 5/5. In terms of biological role, the beta subunit is responsible for the synthesis of L-tryptophan from indole and L-serine. The protein is Tryptophan synthase beta chain of Yersinia enterocolitica serotype O:8 / biotype 1B (strain NCTC 13174 / 8081).